Here is a 249-residue protein sequence, read N- to C-terminus: NH(3)-dependent NAD(+) synthetase (249 aa).

Asp34 is a binding site for Mg(2+). Arg110 provides a ligand contact to deamido-NAD(+). Thr130 provides a ligand contact to ATP. Glu135 contributes to the Mg(2+) binding site. Residues Lys143 and Asp150 each contribute to the deamido-NAD(+) site. ATP contacts are provided by Lys159 and Ser181. Deamido-NAD(+) is bound at residue 232-233 (HK).

Belongs to the NAD synthetase family. In terms of assembly, homodimer.

The enzyme catalyses deamido-NAD(+) + NH4(+) + ATP = AMP + diphosphate + NAD(+) + H(+). The protein operates within cofactor biosynthesis; NAD(+) biosynthesis; NAD(+) from deamido-NAD(+) (ammonia route): step 1/1. Functionally, catalyzes the ATP-dependent amidation of deamido-NAD to form NAD. Uses ammonia as a nitrogen source. This chain is NH(3)-dependent NAD(+) synthetase, found in Picrophilus torridus (strain ATCC 700027 / DSM 9790 / JCM 10055 / NBRC 100828 / KAW 2/3).